Reading from the N-terminus, the 222-residue chain is Cysteine protease inhibitor 9 (222 aa).

The first 26 residues, 1-26 (MKSINILSFLLLSSTLSLVAFARSFS), serve as a signal peptide directing secretion. Residues 27 to 42 (SENPIVLPSTCHDDDN) constitute a propeptide that is removed on maturation. The short motif at 29-34 (NPIVLP) is the Vacuolar targeting signal element. Disulfide bonds link C84-C136 and C185-C191.

Belongs to the protease inhibitor I3 (leguminous Kunitz-type inhibitor) family. As to expression, tuber.

It localises to the vacuole. Putative inhibitor of cysteine proteases. Does not inhibit papain. May protect the plant by inhibiting proteases of invading organisms. This chain is Cysteine protease inhibitor 9, found in Solanum tuberosum (Potato).